A 383-amino-acid polypeptide reads, in one-letter code: Probable 2-succinylbenzoate--CoA ligase (383 aa).

It belongs to the ATP-dependent AMP-binding enzyme family. MenE subfamily.

It catalyses the reaction 2-succinylbenzoate + ATP + CoA = 2-succinylbenzoyl-CoA + AMP + diphosphate. It participates in quinol/quinone metabolism; 1,4-dihydroxy-2-naphthoate biosynthesis; 1,4-dihydroxy-2-naphthoate from chorismate: step 5/7. The protein operates within quinol/quinone metabolism; menaquinone biosynthesis. In terms of biological role, converts 2-succinylbenzoate (OSB) to 2-succinylbenzoyl-CoA (OSB-CoA). May be involved in the biosynthesis of menaquinone. This chain is Probable 2-succinylbenzoate--CoA ligase (menE), found in Mycobacterium tuberculosis (strain CDC 1551 / Oshkosh).